We begin with the raw amino-acid sequence, 203 residues long: DNA-binding transcriptional repressor ScoC (203 aa).

The HTH marR-type domain occupies 13-157; it reads ALVFTQKMAQ…MMCMIRHIYG (145 aa). The segment at residues 63–86 is a DNA-binding region (H-T-H motif); that stretch reads ISEIAKFGVMHVSTAFNFSKKLEE. Residues 183–203 form a disordered region; sequence KKKAKDSAADEPAEELEPVNS. Residues 191-203 are compositionally biased toward acidic residues; the sequence is ADEPAEELEPVNS.

In terms of assembly, homodimer. Interacts with SinR.

Functionally, negative regulator of protease production and sporulation. Acts by binding directly to the promoter of protease genes (aprE and nprE), and by repressing oligopeptide permease operons (appABCDF and oppABCDF), thereby preventing uptake of oligopeptides required for initiation of sporulation. Acts with SinR as a corepressor of epr expression. Binds to non-m6A-5-methylated 5'-GACGAG-3' sites, tested with scpA; when the target is methylated by DnmA, this repressor no longer binds and transcription is up-regulated. The sequence is that of DNA-binding transcriptional repressor ScoC from Bacillus subtilis (strain 168).